The chain runs to 480 residues: Cysteine--tRNA ligase (480 aa).

Cys29 provides a ligand contact to Zn(2+). Positions 31-41 match the 'HIGH' region motif; the sequence is VTVYDHCHIGH. 3 residues coordinate Zn(2+): Cys209, His234, and Glu238. The short motif at 266–270 is the 'KMSKS' region element; it reads KMSKS. Position 269 (Lys269) interacts with ATP.

Belongs to the class-I aminoacyl-tRNA synthetase family. Monomer. The cofactor is Zn(2+).

It localises to the cytoplasm. It catalyses the reaction tRNA(Cys) + L-cysteine + ATP = L-cysteinyl-tRNA(Cys) + AMP + diphosphate. This is Cysteine--tRNA ligase from Geobacter sp. (strain M21).